The primary structure comprises 158 residues: 2-C-methyl-D-erythritol 2,4-cyclodiphosphate synthase (158 aa).

Residues Asp8 and His10 each contribute to the a divalent metal cation site. Residues 8 to 10 and 34 to 35 each bind 4-CDP-2-C-methyl-D-erythritol 2-phosphate; these read DVH and HS. Residue His42 coordinates a divalent metal cation. Residues 56–58, 61–65, 132–135, and Phe139 each bind 4-CDP-2-C-methyl-D-erythritol 2-phosphate; these read DIG, FPDDD, and TTFE.

It belongs to the IspF family. As to quaternary structure, homotrimer. The cofactor is a divalent metal cation.

The catalysed reaction is 4-CDP-2-C-methyl-D-erythritol 2-phosphate = 2-C-methyl-D-erythritol 2,4-cyclic diphosphate + CMP. The protein operates within isoprenoid biosynthesis; isopentenyl diphosphate biosynthesis via DXP pathway; isopentenyl diphosphate from 1-deoxy-D-xylulose 5-phosphate: step 4/6. In terms of biological role, involved in the biosynthesis of isopentenyl diphosphate (IPP) and dimethylallyl diphosphate (DMAPP), two major building blocks of isoprenoid compounds. Catalyzes the conversion of 4-diphosphocytidyl-2-C-methyl-D-erythritol 2-phosphate (CDP-ME2P) to 2-C-methyl-D-erythritol 2,4-cyclodiphosphate (ME-CPP) with a corresponding release of cytidine 5-monophosphate (CMP). The protein is 2-C-methyl-D-erythritol 2,4-cyclodiphosphate synthase of Natranaerobius thermophilus (strain ATCC BAA-1301 / DSM 18059 / JW/NM-WN-LF).